The chain runs to 288 residues: MTFRARREVLRTILTGERCIHPGSVYDAISIRIAEDLGFELGMFGGSAASLAVLGDPDIALITLTELADQMRRMSRAATLPVLVDADHGYGNAMNVRRTVQELEAAGAAGLTIEDTLLPQAFGAAKPQLISLAEGIGKVKAALEGRGDPALVILGRTGAVSVTSLDDAIARARAYEACGVDGLFFTGITARDQLDAIAAATTLPIVLGGAPEHMSDLGYLAARRVRVALQGHAPIAAATQAVYETLKALRGGAAPKQLKGLPSAELTAQVMREAEVKRRLRVYLEPGS.

Substrate is bound at residue Ser47. Asp85 provides a ligand contact to Mg(2+). Substrate-binding residues include Arg156 and His232.

The protein belongs to the isocitrate lyase/PEP mutase superfamily. Oxaloacetate decarboxylase family. Homotetramer; dimer of dimers. Mg(2+) serves as cofactor.

The catalysed reaction is oxaloacetate + H(+) = pyruvate + CO2. In terms of biological role, catalyzes the decarboxylation of oxaloacetate into pyruvate. Seems to play a role in maintaining cellular concentrations of bicarbonate and pyruvate. In Bradyrhizobium sp. (strain BTAi1 / ATCC BAA-1182), this protein is Oxaloacetate decarboxylase.